Consider the following 792-residue polypeptide: Endonuclease MutS2 (792 aa).

334 to 341 (GPNTGGKT) lines the ATP pocket. In terms of domain architecture, Smr spans 717 to 792 (IDLRGMMLSE…ENGVTVVELK (76 aa)).

It belongs to the DNA mismatch repair MutS family. MutS2 subfamily. As to quaternary structure, homodimer. Binds to stalled ribosomes, contacting rRNA.

Functionally, endonuclease that is involved in the suppression of homologous recombination and thus may have a key role in the control of bacterial genetic diversity. In terms of biological role, acts as a ribosome collision sensor, splitting the ribosome into its 2 subunits. Detects stalled/collided 70S ribosomes which it binds and splits by an ATP-hydrolysis driven conformational change. Acts upstream of the ribosome quality control system (RQC), a ribosome-associated complex that mediates the extraction of incompletely synthesized nascent chains from stalled ribosomes and their subsequent degradation. Probably generates substrates for RQC. The sequence is that of Endonuclease MutS2 from Ruminiclostridium cellulolyticum (strain ATCC 35319 / DSM 5812 / JCM 6584 / H10) (Clostridium cellulolyticum).